A 506-amino-acid chain; its full sequence is Acetylcholine receptor subunit gamma (506 aa).

The N-terminal stretch at 1–17 (MVLTLLLIICLALEVRS) is a signal peptide. The Extracellular segment spans residues 18 to 235 (ENEEGRLIEK…IIFFLIIQRK (218 aa)). Residue Asn85 is glycosylated (N-linked (GlcNAc...) asparagine). Cys145 and Cys159 form a disulfide bridge. 3 helical membrane passes run 236-260 (PLFY…VYFL), 269-287 (CTLS…FLIA), and 303-324 (YLIF…VLNV). At 325-466 (SLRTPNTHSL…WVLIGKVIDK (142 aa)) the chain is on the cytoplasmic side. Tyr381 carries the phosphotyrosine; by Tyr-kinases modification. The chain crosses the membrane as a helical span at residues 467–490 (ACFWIALLLFSIGTLAIFLTGHFN).

It belongs to the ligand-gated ion channel (TC 1.A.9) family. Acetylcholine receptor (TC 1.A.9.1) subfamily. Gamma/CHRNG sub-subfamily. As to quaternary structure, pentamer of two alpha chains, and one each of the beta, delta, and gamma chains. Post-translationally, seems not to be glycosylated on Asn-158.

It localises to the postsynaptic cell membrane. The protein resides in the cell membrane. It catalyses the reaction K(+)(in) = K(+)(out). The enzyme catalyses Na(+)(in) = Na(+)(out). Functionally, after binding acetylcholine, the AChR responds by an extensive change in conformation that affects all subunits and leads to opening of an ion-conducting channel across the plasma membrane. The protein is Acetylcholine receptor subunit gamma (CHRNG) of Tetronarce californica (Pacific electric ray).